Here is a 342-residue protein sequence, read N- to C-terminus: HTH-type transcriptional regulator GbpR (342 aa).

The HTH lysR-type domain maps to 16 to 73 (LKLRHLQLFVALDEHRNLHRAAASLTMSQPAASKLLGDLEESLGVTLFERHGRGVEPN). Residues 33–52 (LHRAAASLTMSQPAASKLLG) constitute a DNA-binding region (H-T-H motif).

The protein belongs to the LysR transcriptional regulatory family.

Functionally, does not seem to be required for sbpA expression. In Azospirillum brasilense, this protein is HTH-type transcriptional regulator GbpR (gbpR).